The primary structure comprises 299 residues: Acetylglutamate kinase (299 aa).

Residues 68–69 (GG), arginine 90, and asparagine 194 contribute to the substrate site.

The protein belongs to the acetylglutamate kinase family. ArgB subfamily.

It is found in the cytoplasm. It carries out the reaction N-acetyl-L-glutamate + ATP = N-acetyl-L-glutamyl 5-phosphate + ADP. It functions in the pathway amino-acid biosynthesis; L-arginine biosynthesis; N(2)-acetyl-L-ornithine from L-glutamate: step 2/4. Functionally, catalyzes the ATP-dependent phosphorylation of N-acetyl-L-glutamate. This chain is Acetylglutamate kinase, found in Psychrobacter cryohalolentis (strain ATCC BAA-1226 / DSM 17306 / VKM B-2378 / K5).